The following is a 192-amino-acid chain: Protein GrpE (192 aa).

Residues 1 to 43 form a disordered region; sequence MQENKQPSEIQGELPQPPDGESVPPQPTNEQAPPDTDTMPRIE.

Belongs to the GrpE family. Homodimer.

The protein localises to the cytoplasm. Its function is as follows. Participates actively in the response to hyperosmotic and heat shock by preventing the aggregation of stress-denatured proteins, in association with DnaK and GrpE. It is the nucleotide exchange factor for DnaK and may function as a thermosensor. Unfolded proteins bind initially to DnaJ; upon interaction with the DnaJ-bound protein, DnaK hydrolyzes its bound ATP, resulting in the formation of a stable complex. GrpE releases ADP from DnaK; ATP binding to DnaK triggers the release of the substrate protein, thus completing the reaction cycle. Several rounds of ATP-dependent interactions between DnaJ, DnaK and GrpE are required for fully efficient folding. This Aromatoleum aromaticum (strain DSM 19018 / LMG 30748 / EbN1) (Azoarcus sp. (strain EbN1)) protein is Protein GrpE.